We begin with the raw amino-acid sequence, 517 residues long: Crotonobetaine/carnitine--CoA ligase (517 aa).

Belongs to the ATP-dependent AMP-binding enzyme family.

The catalysed reaction is 4-(trimethylamino)butanoate + ATP + CoA = 4-(trimethylamino)butanoyl-CoA + AMP + diphosphate. The enzyme catalyses crotonobetaine + ATP + CoA = crotonobetainyl-CoA + AMP + diphosphate. It carries out the reaction (R)-carnitine + ATP + CoA = (R)-carnitinyl-CoA + AMP + diphosphate. It participates in amine and polyamine metabolism; carnitine metabolism. Functionally, catalyzes the transfer of CoA to carnitine, generating the initial carnitinyl-CoA needed for the CaiB reaction cycle. Also has activity toward crotonobetaine and gamma-butyrobetaine. This chain is Crotonobetaine/carnitine--CoA ligase, found in Salmonella choleraesuis (strain SC-B67).